Consider the following 109-residue polypeptide: uncharacterized protein (109 aa).

The chain crosses the membrane as a helical span at residues 75 to 95 (LHFFFLFWLLNFILFFRIHLY).

It is found in the membrane. This is an uncharacterized protein from Schizosaccharomyces pombe (strain 972 / ATCC 24843) (Fission yeast).